A 580-amino-acid chain; its full sequence is Methyl-CpG-binding domain protein 4 (580 aa).

Residues 1–36 (MGTTGLESLSLGDRGAAPTVTSSERLVPDPPNDLRK) are disordered. The MBD domain occupies 76 to 148 (ATAGTECRKS…EDFDFTVLSK (73 aa)). Residues S318 and S428 each carry the phosphoserine modification. D560 is an active-site residue.

Interacts with MLH1.

It localises to the nucleus. Its function is as follows. Mismatch-specific DNA N-glycosylase involved in DNA repair. Has thymine glycosylase activity and is specific for G:T mismatches within methylated and unmethylated CpG sites. Can also remove uracil or 5-fluorouracil in G:U mismatches. Has no lyase activity. Was first identified as methyl-CpG-binding protein. The sequence is that of Methyl-CpG-binding domain protein 4 from Homo sapiens (Human).